The sequence spans 247 residues: MRYRAVVEYDGTAFIGWQRQKGVAGRSVQESIEDAIYRLSQQHVTVFAAGRTDAGVHALGQVVHFDLNTSLQDYVIKNALNHYLRSDMVSILSLEEAAEGFHARFSAKKRHYMYKIVNRDAPPCLDRLRMWHVPKQLNVSDMQEAASHMVGEKKDFASFRAKECQSKSSVRTVDRIDCVREGNNIFVHVSAKSFLHKQVRIIVGTLVQCGHGAFPPSYVLEILERKNRAAAGITAPPHGLYLVLVEY.

Catalysis depends on Asp-53, which acts as the Nucleophile. Tyr-112 contributes to the substrate binding site.

The protein belongs to the tRNA pseudouridine synthase TruA family. As to quaternary structure, homodimer.

The enzyme catalyses uridine(38/39/40) in tRNA = pseudouridine(38/39/40) in tRNA. Its function is as follows. Formation of pseudouridine at positions 38, 39 and 40 in the anticodon stem and loop of transfer RNAs. The polypeptide is tRNA pseudouridine synthase A (Anaplasma marginale (strain Florida)).